The chain runs to 356 residues: MQPSTLQALAKRALATQHVSKDDYYILERCGLWWHEAPISIYIDDDNQIMIRTLCFKEGIKLNTALVLAVKENNEDLIMLFTEWGANINYGLLFINNEHTRNLCRKLGAKEELETSEILRFFFETKCKITSSNVILCHELFSNNPFLQNVNMVDLRMIIYWELKDLPTNSMLNEISFSEMLTKYWYGIAVKYNLKEAIQYFCQEYRHFDEWRLICALSFNNVFDLHEICNTTKIHMSINKMMELACMRDNNFLTIYYCFALGANANRAMLISVKNFCIENMFFCMDLGANVIEHSKTLADIYGYSIIVNILSLKIYKANPILLSKETNPEKINTLLKNYYSKNMLAYDICCIDNYL.

One copy of the ANK repeat lies at 61-93 (KLNTALVLAVKENNEDLIMLFTEWGANINYGLL).

Belongs to the asfivirus MGF 360 family.

Functionally, plays a role in virus cell tropism, and may be required for efficient virus replication in macrophages. This is Protein MGF 360-3L from African swine fever virus (strain Badajoz 1971 Vero-adapted) (Ba71V).